Here is a 240-residue protein sequence, read N- to C-terminus: Ditrans,polycis-undecaprenyl-diphosphate synthase ((2E,6E)-farnesyl-diphosphate specific) (240 aa).

Asp18 is an active-site residue. Residue Asp18 participates in Mg(2+) binding. Residues 19-22, Trp23, Arg31, His35, and 63-65 each bind substrate; these read GNGR and SSE. The active-site Proton acceptor is Asn66. Substrate is bound by residues Trp67, Arg69, Arg186, and 192–194; that span reads RIS. Glu205 is a binding site for Mg(2+).

It belongs to the UPP synthase family. Homodimer. It depends on Mg(2+) as a cofactor.

It catalyses the reaction 8 isopentenyl diphosphate + (2E,6E)-farnesyl diphosphate = di-trans,octa-cis-undecaprenyl diphosphate + 8 diphosphate. In terms of biological role, catalyzes the sequential condensation of isopentenyl diphosphate (IPP) with (2E,6E)-farnesyl diphosphate (E,E-FPP) to yield (2Z,6Z,10Z,14Z,18Z,22Z,26Z,30Z,34E,38E)-undecaprenyl diphosphate (di-trans,octa-cis-UPP). UPP is the precursor of glycosyl carrier lipid in the biosynthesis of bacterial cell wall polysaccharide components such as peptidoglycan and lipopolysaccharide. The chain is Ditrans,polycis-undecaprenyl-diphosphate synthase ((2E,6E)-farnesyl-diphosphate specific) from Pasteurella multocida (strain Pm70).